The chain runs to 228 residues: Carboxylesterase SOBER1 (228 aa).

Residues serine 106, aspartate 160, and histidine 192 each act as charge relay system in the active site.

This sequence belongs to the AB hydrolase superfamily. AB hydrolase 2 family.

Functionally, possesses carboxylesterase activity in vitro with a preference for short acyl chain substrates. Functions as a negative regulator of the hypersensitive response (HR) triggered by the bacterial type III effector protein AvrBsT. Possesses phospholipase A2 (PLA2) activity and hydrolyzes phosphatidylcholine (PC), a lipid that is hydrolyzed by phospholipase D (PLD) to produce phosphatidic acid (PA). Required to suppress AvrBsT-dependent HR and PLD-dependent production of PA in response to AvrBsT elicitation. The sequence is that of Carboxylesterase SOBER1 from Arabidopsis thaliana (Mouse-ear cress).